Consider the following 444-residue polypeptide: MHILVVSVNYRTAPVEFREKLTFQAAEIERAMTTLQNQKSVLENVIVSTCNRTEIYAVVDQLHTGRYYIKKFLADWFQLEIEEVAPYLTIFEQDGAIDHLFRVTCGLDSMVVGETQILGQIKDSFLEAQQVKATGTIFNELFKQVITLAKRAHSETTIGESAMSVSYAAVELGKKIFGELTDCHVLILGAGKMGELALQNLYGSGARKVTVMNRTLSKAEVMAEKYMGHAKSLSELQCALLEADILISSTGASEYVITKEMMTKVEKMRSGRPLFMVDIAVPRDIDPAIDELEGSFLYDIDDLQGVVEANRAERLKEAEKIQFMIEEEIVLFKTWLSTLGVVPLISALRDKALAIQSETMVSLERKIPNLSDREKKVISKHTKSIINQLLKDPILVAKEIAAEEGASEKLALFAKIFDLETEEVESRAEEVEHKRVWTPSVPSL.

Substrate contacts are provided by residues 49 to 52, S109, 114 to 116, and Q120; these read TCNR and ETQ. C50 acts as the Nucleophile in catalysis. 189-194 contributes to the NADP(+) binding site; sequence GAGKMG.

The protein belongs to the glutamyl-tRNA reductase family. As to quaternary structure, homodimer.

The catalysed reaction is (S)-4-amino-5-oxopentanoate + tRNA(Glu) + NADP(+) = L-glutamyl-tRNA(Glu) + NADPH + H(+). The protein operates within porphyrin-containing compound metabolism; protoporphyrin-IX biosynthesis; 5-aminolevulinate from L-glutamyl-tRNA(Glu): step 1/2. Functionally, catalyzes the NADPH-dependent reduction of glutamyl-tRNA(Glu) to glutamate 1-semialdehyde (GSA). The polypeptide is Glutamyl-tRNA reductase (Bacillus cereus (strain ATCC 14579 / DSM 31 / CCUG 7414 / JCM 2152 / NBRC 15305 / NCIMB 9373 / NCTC 2599 / NRRL B-3711)).